A 539-amino-acid chain; its full sequence is Transcription factor prr1 (539 aa).

Residues 7 to 111 mediate DNA binding; the sequence is SSDFVRKLFN…LLDNIKRKAP (105 aa). T221 is subject to Phosphothreonine. Residue S223 is modified to Phosphoserine. A compositionally biased stretch (polar residues) spans 251–263; the sequence is GTAQPSLYNTPSS. Residues 251–281 are disordered; the sequence is GTAQPSLYNTPSSDYELANQEKPADSMASAA. The Response regulatory domain maps to 369–483; the sequence is RILLVEDDEL…TLLQLLKKQL (115 aa). 4-aspartylphosphate is present on D418.

In the N-terminal section; belongs to the HSF family.

Its subcellular location is the nucleus. Involved in oxidative stress. Transcription factor that acts upon trr1 and ctt1. In Schizosaccharomyces pombe (strain 972 / ATCC 24843) (Fission yeast), this protein is Transcription factor prr1 (prr1).